The primary structure comprises 224 residues: TM2 domain-containing protein amaretto (224 aa).

The signal sequence occupies residues 1–18 (MRIFYGLLAFLVARQHDA). At 19-154 (QAIQARSDKE…FLRAGVPCVR (136 aa)) the chain is on the extracellular side. Asn-102 and Asn-142 each carry an N-linked (GlcNAc...) asparagine glycan. The chain crosses the membrane as a helical span at residues 155–175 (YTDHYFVTTLIYSMLLGFLGM). The TM2 domain occupies 157 to 205 (DHYFVTTLIYSMLLGFLGMDRFCLGQTGTAVGKLLTMGGVGVWWIIDVI). At 176–189 (DRFCLGQTGTAVGK) the chain is on the cytoplasmic side. The chain crosses the membrane as a helical span at residues 190-210 (LLTMGGVGVWWIIDVILLITN). Topologically, residues 211–224 (NLLPEDGSNWNPYV) are extracellular.

This sequence belongs to the TM2 family.

It localises to the membrane. Functionally, positive regulator of Notch signaling. Maternal neurogenic factor involved in Notch signaling-dependent neuroectodermal specification during early embryogenesis. Functions cooperatively with amx/TM2D3 and bisc/TM2D1. This chain is TM2 domain-containing protein amaretto, found in Drosophila melanogaster (Fruit fly).